Here is a 370-residue protein sequence, read N- to C-terminus: GTPase Obg (370 aa).

Residues 1 to 159 (MKFIDEARIE…RMLRLELKVL (159 aa)) enclose the Obg domain. The 175-residue stretch at 160 to 334 (ADVGLLGMPN…LCYAIYDYLA (175 aa)) folds into the OBG-type G domain. Residues 166–173 (GMPNAGKS), 191–195 (FTTLA), 213–216 (DIPG), 284–287 (NKLD), and 315–317 (SAL) each bind GTP. 2 residues coordinate Mg(2+): S173 and T193. Positions 344–370 (EEEDLATDVRFRDAPPADGGATPGGDA) are disordered.

This sequence belongs to the TRAFAC class OBG-HflX-like GTPase superfamily. OBG GTPase family. As to quaternary structure, monomer. It depends on Mg(2+) as a cofactor.

It localises to the cytoplasm. Functionally, an essential GTPase which binds GTP, GDP and possibly (p)ppGpp with moderate affinity, with high nucleotide exchange rates and a fairly low GTP hydrolysis rate. Plays a role in control of the cell cycle, stress response, ribosome biogenesis and in those bacteria that undergo differentiation, in morphogenesis control. This is GTPase Obg from Burkholderia ambifaria (strain MC40-6).